The sequence spans 463 residues: Methionine aminopeptidase 2-1 (463 aa).

Residues 1–12 are compositionally biased toward basic and acidic residues; the sequence is MGSKTPDGHRQG. Residues 1 to 96 are disordered; sequence MGSKTPDGHR…SGQQTTPPRV (96 aa). The segment covering 41–53 has biased composition (acidic residues); the sequence is SGEDDEDGDDDEE. Polar residues predominate over residues 58–67; that stretch reads DLNSRAQPNN. The segment covering 70–85 has biased composition (basic residues); the sequence is KKRKRKNNKKKKKKRP. Residue His215 participates in substrate binding. 3 residues coordinate a divalent metal cation: Asp236, Asp247, and His316. His324 provides a ligand contact to substrate. Residues Glu349 and Glu444 each contribute to the a divalent metal cation site.

The protein belongs to the peptidase M24A family. Methionine aminopeptidase eukaryotic type 2 subfamily. It depends on Co(2+) as a cofactor. Zn(2+) is required as a cofactor. Requires Mn(2+) as cofactor. The cofactor is Fe(2+).

It localises to the cytoplasm. It catalyses the reaction Release of N-terminal amino acids, preferentially methionine, from peptides and arylamides.. In terms of biological role, cotranslationally removes the N-terminal methionine from nascent proteins. The N-terminal methionine is often cleaved when the second residue in the primary sequence is small and uncharged (Met-Ala-, Cys, Gly, Pro, Ser, Thr, or Val). This chain is Methionine aminopeptidase 2-1, found in Arthroderma otae (strain ATCC MYA-4605 / CBS 113480) (Microsporum canis).